A 213-amino-acid polypeptide reads, in one-letter code: Ras-related protein Rab-39B (213 aa).

Positions 17, 20, 21, 22, 23, 37, and 40 each coordinate GTP. Ser-22 lines the Mg(2+) pocket. A switch-I region spans residues 35-43; that stretch reads QVSDPTVGV. Thr-40 and Asp-64 together coordinate Mg(2+). GTP contacts are provided by Gly-67, His-123, Lys-124, Asp-126, Ala-154, and Arg-155. The tract at residues 67–83 is switch-II; the sequence is GQERFRSITRAYYRNSV. A Phosphoserine modification is found at Ser-201. Residues Cys-211 and Cys-213 are each lipidated (S-geranylgeranyl cysteine). Cys-213 bears the Cysteine methyl ester mark.

The protein belongs to the small GTPase superfamily. Rab family. Interacts (GDP-bound) with C9orf72; C9orf72 in complex with SMCR8 acts as a GEF for RAB39B. Interacts (in GTP-bound form) with PICK1 (via PDZ domain); a PICK1 homodimer may allow simultaneous association of RAB39B and GRIA2 to PICK1 which is involved in GRIA2 trafficking. Interacts with isoform c of RASSF1; the interaction is strong. Interacts with isoform a of RASSF1; the interaction is weak. Interacts with the DLG4/PSD-95. Interacts (GTP-bound) with HOPS complex components VPS39 and VPS41. Requires Mg(2+) as cofactor. In terms of tissue distribution, specifically expressed in neuron and neuronal precursors in the brain. Expression is high in all regions of the brain with highest levels observed in the hippocampus.

It is found in the cell membrane. The protein localises to the cytoplasmic vesicle membrane. It localises to the golgi apparatus. The protein resides in the cytoplasmic vesicle. Its subcellular location is the autophagosome membrane. It is found in the autolysosome membrane. The enzyme catalyses GTP + H2O = GDP + phosphate + H(+). Its activity is regulated as follows. Regulated by guanine nucleotide exchange factors (GEFs) including C9orf72-SMCR8 complex, which promote the exchange of bound GDP for free GTP. Regulated by GTPase activating proteins (GAPs) which increase the GTP hydrolysis activity. Inhibited by GDP dissociation inhibitors (GDIs). The small GTPases Rab are key regulators of intracellular membrane trafficking, from the formation of transport vesicles to their fusion with membranes. Rabs cycle between an inactive GDP-bound form and an active GTP-bound form that is able to recruit to membranes different sets of downstream effectors directly responsible for vesicle formation, movement, tethering and fusion. RAB39B is involved in autophagy and may function in autophagosome formation. Binds downstream effector PICK1 to ensure selectively GRIA2 exit from the endoplasmic reticulum to the Golgi and to regulate AMPAR composition at the post-synapses and thus synaptic transmission. May regulate the homeostasis of SNCA/alpha-synuclein. The polypeptide is Ras-related protein Rab-39B (Mus musculus (Mouse)).